The following is a 392-amino-acid chain: N-acyl-phosphatidylethanolamine-hydrolyzing phospholipase D (392 aa).

The residue at position 1 (Met1) is an N-acetylmethionine. Positions 1–16 are enriched in polar residues; the sequence is MDENETNQLLMTSNQY. Positions 1–39 are disordered; sequence MDENETNQLLMTSNQYPKEAVRKRQNSRNSGGSDSSRFS. Residues 27–36 show a composition bias toward low complexity; it reads SRNSGGSDSS. Residues His183 and His185 each contribute to the Zn(2+) site. An N-acyl-1,2-diacyl-sn-glycero-3-phosphoethanolamine is bound at residue Tyr186. The Zn(2+) site is built by Asp187, His188, and His251. The deoxycholate site is built by Lys254 and Met258. Position 282 (Asp282) interacts with Zn(2+). His319 contributes to the an N-acyl-1,2-diacyl-sn-glycero-3-phosphoethanolamine binding site. Position 341 (His341) interacts with Zn(2+). Ala346 lines the deoxycholate pocket.

This sequence belongs to the NAPE-PLD family. As to quaternary structure, homodimer. Bile acids promote the assembly of inactive monomers into an active dimer and enable catalysis. The cofactor is Zn(2+). As to expression, widely expressed. Highest expression in brain, kidney and testis (at protein level). Expressed in adipose tissue (at protein level).

It is found in the golgi apparatus membrane. It localises to the early endosome membrane. Its subcellular location is the nucleus envelope. The protein localises to the nucleus. The protein resides in the nucleoplasm. The enzyme catalyses an N-acyl-1,2-diacyl-sn-glycero-3-phosphoethanolamine + H2O = an N-acylethanolamine + a 1,2-diacyl-sn-glycero-3-phosphate + H(+). It catalyses the reaction N-butanoyl-1-hexadecanoyl-2-(9Z,12Z-octadecadienoyl)-sn-glycero-3-phosphoethanolamine + H2O = N-butanoyl ethanolamine + 1-hexadecanoyl-2-(9Z,12Z-octadecadienoyl)-sn-glycero-3-phosphate + H(+). The catalysed reaction is N-hexanoyl-1-hexadecanoyl-2-(9Z,12Z-octadecadienoyl)-sn-glycero-3-phosphoethanolamine + H2O = N-hexanoyl ethanolamine + 1-hexadecanoyl-2-(9Z,12Z-octadecadienoyl)-sn-glycero-3-phosphate + H(+). It carries out the reaction N-octanoyl-1-hexadecanoyl-2-(9Z,12Z-octadecadienoyl)-sn-glycero-3-phosphoethanolamine + H2O = N-octanoyl ethanolamine + 1-hexadecanoyl-2-(9Z,12Z-octadecadienoyl)-sn-glycero-3-phosphate + H(+). The enzyme catalyses N-decanoyl-1-hexadecanoyl-2-(9Z,12Z-octadecadienoyl)-sn-glycero-3-phosphoethanolamine + H2O = N-decanoyl ethanolamine + 1-hexadecanoyl-2-(9Z,12Z-octadecadienoyl)-sn-glycero-3-phosphate + H(+). It catalyses the reaction N-dodecanoyl-1,2-di-(9Z-octadecenoyl)-sn-glycero-3-phosphoethanolamine + H2O = N-dodecanoylethanolamine + 1,2-di-(9Z-octadecenoyl)-sn-glycero-3-phosphate + H(+). The catalysed reaction is N-tetradecanoyl-1,2-di-(9Z-octadecenoyl)-sn-glycero-3-phosphoethanolamine + H2O = N-tetradecanoylethanolamine + 1,2-di-(9Z-octadecenoyl)-sn-glycero-3-phosphate + H(+). It carries out the reaction N-hexadecanoyl-1,2-di-(9Z-octadecenoyl)-sn-glycero-3-phosphoethanolamine + H2O = N-hexadecanoylethanolamine + 1,2-di-(9Z-octadecenoyl)-sn-glycero-3-phosphate + H(+). The enzyme catalyses N,1-dihexadecanoyl-2-(9Z,12Z-octadecadienoyl)-sn-glycero-3-phosphoethanolamine + H2O = 1-hexadecanoyl-2-(9Z,12Z-octadecadienoyl)-sn-glycero-3-phosphate + N-hexadecanoylethanolamine + H(+). It catalyses the reaction N-octadecanoyl-1,2-di-(9Z-octadecenoyl)-sn-glycero-3-phosphoethanolamine + H2O = N-octadecanoyl ethanolamine + 1,2-di-(9Z-octadecenoyl)-sn-glycero-3-phosphate + H(+). The catalysed reaction is N,1,2-tri-(9Z-octadecenoyl)-sn-glycero-3-phosphoethanolamine + H2O = N-(9Z-octadecenoyl) ethanolamine + 1,2-di-(9Z-octadecenoyl)-sn-glycero-3-phosphate + H(+). It carries out the reaction N-(5Z,8Z,11Z,14Z-eicosatetraenoyl)-1,2-diacyl-sn-glycero-3-phosphoethanolamine + H2O = N-(5Z,8Z,11Z,14Z-eicosatetraenoyl)-ethanolamine + a 1,2-diacyl-sn-glycero-3-phosphate + H(+). The enzyme catalyses N-(5Z,8Z,11Z,14Z-eicosatetraenoyl)-1,2-di-(9Z-octadecenoyl)-sn-glycero-3-phosphoethanolamine + H2O = N-(5Z,8Z,11Z,14Z-eicosatetraenoyl)-ethanolamine + 1,2-di-(9Z-octadecenoyl)-sn-glycero-3-phosphate + H(+). It catalyses the reaction 1-O-(1Z-octadecenoyl)-2-(9Z-octadecenoyl)-sn-glycero-3-phospho-N-hexadecanoyl-ethanolamine + H2O = 1-O-(1Z-octadecenoyl)-2-(9Z-octadecenoyl)-sn-glycero-3-phosphate + N-hexadecanoylethanolamine + H(+). The catalysed reaction is N,1-diacyl-sn-glycero-3-phosphoethanolamine + H2O = an N-acylethanolamine + a 1-acyl-sn-glycero-3-phosphate + H(+). It carries out the reaction N,1-dihexadecanoyl-sn-glycero-3-phosphoethanolamine + H2O = N-hexadecanoylethanolamine + 1-hexadecanoyl-sn-glycero-3-phosphate + H(+). The enzyme catalyses N-(5Z,8Z,11Z,14Z-eicosatetraenoyl)-1-(9Z-octadecenoyl)-sn-glycero-3-phosphoethanolamine + H2O = N-(5Z,8Z,11Z,14Z-eicosatetraenoyl)-ethanolamine + 1-(9Z-octadecenoyl)-sn-glycero-3-phosphate + H(+). Its activity is regulated as follows. Activated by divalent cations. Activated by bile acids. In terms of biological role, D-type phospholipase that hydrolyzes N-acyl-phosphatidylethanolamines (NAPEs) to produce bioactive N-acylethanolamines/fatty acid ethanolamides (NAEs/FAEs) and phosphatidic acid. Cleaves the terminal phosphodiester bond of diacyl- and alkenylacyl-NAPEs, primarily playing a role in the generation of long-chain saturated and monounsaturated NAEs in the brain. May control NAPE homeostasis in dopaminergic neuron membranes and regulate neuron survival, partly through RAC1 activation. As a regulator of lipid metabolism in the adipose tissue, mediates the crosstalk between adipocytes, gut microbiota and immune cells to control body temperature and weight. In particular, regulates energy homeostasis by promoting cold-induced brown or beige adipocyte differentiation program to generate heat from fatty acids and glucose. Has limited D-type phospholipase activity toward N-acyl lyso-NAPEs. This is N-acyl-phosphatidylethanolamine-hydrolyzing phospholipase D (NAPEPLD) from Bos taurus (Bovine).